We begin with the raw amino-acid sequence, 99 residues long: Microcin E492 (99 aa).

The first 15 residues, 1-15 (MREISQKDLNLAFGA), serve as a signal peptide directing secretion. Positions 80–99 (SWNGSGSGYNSATSSSGSGS) are disordered. A compositionally biased stretch (low complexity) spans 87 to 99 (GYNSATSSSGSGS). Serine 99 carries the serine microcin E492 siderophore ester modification.

This sequence belongs to the class IIa microcin family. Multimer. Possibly forms a homodimer or a homotrimer. In terms of processing, the C-terminal Ser is modified by attachment to a siderophore similar to enterobactin, which can bind one atom of iron. The modification consists of an ester linkage of the serine carboxyl to O6 of a glucose which is linked by a C-glycosidic bond to the 5'-benzoyl of a linear triester of N-(2,3-dihydroxybenzoyl)serine. Presence of the siderophore ester increases the antibacterial activity of the protein.

Its function is as follows. Channel-forming bacteriocin. Forms cation-selective channels. Active on enterobacteria, with highest activity against E.coli. Not active on other Gram-negative bacteria, Gram-positive bacteria or fungi. The unmodified protein is active against E.coli and S.enteritidis. When the siderophore ester is present at Ser-99, antibacterial activity against these species is increased and activity is also detected against E.cloacae and K.pneumoniae. Neutralized by its immunity protein MceB. The protein is Microcin E492 of Klebsiella pneumoniae.